A 3114-amino-acid polypeptide reads, in one-letter code: Centromere protein F (3114 aa).

The interaction with SNAP25 and required for localization to the cytoplasm stretch occupies residues 1–481 (MSWALEEWKE…IKENELRRSM (481 aa)). A coiled-coil region spans residues 13–131 (PTRALQKIQE…KSELERSQQA (119 aa)). The residue at position 106 (S106) is a Phosphoserine. Phosphothreonine occurs at positions 144, 151, and 154. At Y158 the chain carries Phosphotyrosine. Residues 211-235 (QASSSVFSWQQEKTPSHLSSNSQRT) show a composition bias toward polar residues. Residues 211-236 (QASSSVFSWQQEKTPSHLSSNSQRTP) form a disordered region. Residues S242 and S276 each carry the phosphoserine modification. Positions 280–685 (LDQLKAQNQE…SVEIRNLHNV (406 aa)) form a coiled coil. S773, S783, S821, S834, S838, and S876 each carry phosphoserine. Coiled-coil stretches lie at residues 899–989 (VAET…LNQE) and 1196–1244 (LEVK…IRGD). S1248, S1255, and S1259 each carry phosphoserine. The stretch at 1549–1646 (VEELESLCEV…ELEVARLQLQ (98 aa)) forms a coiled coil. S1651, S1652, and S1654 each carry phosphoserine. Disordered regions lie at residues 1667–1690 (RNESCDISKEHTSETTERTPKHDV) and 1710–1746 (TETGAVKPTGECSGEQSPDTNYEPPGEDKTQGSSECI). Positions 1669–1690 (ESCDISKEHTSETTERTPKHDV) are enriched in basic and acidic residues. S1726 bears the Phosphoserine mark. T1862 is modified (phosphothreonine). 2 positions are modified to phosphoserine: S1868 and S1892. 2 coiled-coil regions span residues 1890–2078 (NDSW…LQAR) and 2107–2891 (LSST…LCSQ). Residues 2026–2351 (LLKDKTHLQE…ERELEIARTN (326 aa)) are interaction with NDE1 and NDEL1. 2 repeat units span residues 2111–2290 (QEEV…QSLD) and 2293–2472 (IEEE…QNLS). The interval 2111–2472 (QEEVHQLRRG…ACKAKEQNLS (362 aa)) is 2 X 177 AA tandem repeats. Residues 2392–2829 (SEKENLTNEL…QAAQEKQKTG (438 aa)) are sufficient for self-association. The interval 2392–3017 (SEKENLTNEL…ATRTSPRLAA (626 aa)) is sufficient for centromere localization. Phosphoserine is present on residues S2416 and S2417. Position 2779 is an N6-acetyllysine (K2779). A sufficient for nuclear localization region spans residues 2831–3017 (VMDTKVDELT…ATRTSPRLAA (187 aa)). Positions 2891–2977 (QQSKQDSRGS…AEDTEGTEFE (87 aa)) are disordered. 4 positions are modified to phosphoserine: S2900, S2911, S2922, and S2936. Positions 2919-2936 (KRLSSGQNKASGKRQRSS) match the Nuclear localization signal motif. A Phosphothreonine modification is found at T2949. Phosphoserine occurs at positions 2952, 2998, 3023, and 3026. Positions 3024–3114 (PLSLGKENLA…SNGSENCKVQ (91 aa)) are disordered. A compositionally biased stretch (polar residues) spans 3033–3045 (AESSKPTAGGSRS). Phosphoserine is present on residues S3054, S3079, and S3083. Positions 3079–3089 (SPTDSPREGLR) are enriched in basic and acidic residues. Polar residues predominate over residues 3105-3114 (SNGSENCKVQ). The residue at position 3111 (C3111) is a Cysteine methyl ester. C3111 carries the S-farnesyl cysteine lipid modification. Residues 3112–3114 (KVQ) constitute a propeptide, removed in mature form.

The protein belongs to the centromere protein F family. As to quaternary structure, interacts with and STX4 (via C-terminus). Interacts (via N-terminus) with RBL1, RBL2 and SNAP25. Self-associates. Interacts with CENP-E and BUBR1 (via C-terminus). Interacts (via C-terminus) with NDE1, NDEL1 and RB1. Hyperphosphorylated during mitosis.

The protein localises to the cytoplasm. It localises to the perinuclear region. The protein resides in the nucleus matrix. It is found in the chromosome. Its subcellular location is the centromere. The protein localises to the kinetochore. It localises to the cytoskeleton. The protein resides in the spindle. Functionally, required for kinetochore function and chromosome segregation in mitosis. Required for kinetochore localization of dynein, LIS1, NDE1 and NDEL1. Regulates recycling of the plasma membrane by acting as a link between recycling vesicles and the microtubule network though its association with STX4 and SNAP25. Acts as a potential inhibitor of pocket protein-mediated cellular processes during development by regulating the activity of RB proteins during cell division and proliferation. May play a regulatory or permissive role in the normal embryonic cardiomyocyte cell cycle and in promoting continued mitosis in transformed, abnormally dividing neonatal cardiomyocytes. Interaction with RB directs embryonic stem cells toward a cardiac lineage. Involved in the regulation of DNA synthesis and hence cell cycle progression, via its C-terminus. Has a potential role regulating skeletal myogenesis and in cell differentiation in embryogenesis. Involved in dendritic cell regulation of T-cell immunity against chlamydia. The sequence is that of Centromere protein F (CENPF) from Homo sapiens (Human).